The chain runs to 71 residues: UPF0346 protein BcerKBAB4_2120 (71 aa).

The protein belongs to the UPF0346 family.

The sequence is that of UPF0346 protein BcerKBAB4_2120 from Bacillus mycoides (strain KBAB4) (Bacillus weihenstephanensis).